A 101-amino-acid chain; its full sequence is Small ribosomal subunit protein uS14 (101 aa).

This sequence belongs to the universal ribosomal protein uS14 family. As to quaternary structure, part of the 30S ribosomal subunit. Contacts proteins S3 and S10.

In terms of biological role, binds 16S rRNA, required for the assembly of 30S particles and may also be responsible for determining the conformation of the 16S rRNA at the A site. In Chlamydia pneumoniae (Chlamydophila pneumoniae), this protein is Small ribosomal subunit protein uS14.